The chain runs to 708 residues: ATP-dependent DNA helicase Hel308 (708 aa).

A Q motif motif is present at residues methionine 1–threonine 29. Residues glutamine 28 and serine 46 to threonine 53 contribute to the ATP site. The region spanning lysine 33–asparagine 196 is the Helicase ATP-binding domain. The DEAH box signature appears at aspartate 145–histidine 148. The region spanning histidine 229–glycine 435 is the Helicase C-terminal domain.

This sequence belongs to the helicase family. Hel308 subfamily. In terms of assembly, monomer.

It carries out the reaction Couples ATP hydrolysis with the unwinding of duplex DNA by translocating in the 3'-5' direction.. It catalyses the reaction ATP + H2O = ADP + phosphate + H(+). Its function is as follows. DNA-dependent ATPase and 3'-5' DNA helicase that may be involved in repair of stalled replication forks. The protein is ATP-dependent DNA helicase Hel308 of Saccharolobus solfataricus (strain ATCC 35092 / DSM 1617 / JCM 11322 / P2) (Sulfolobus solfataricus).